The following is a 1382-amino-acid chain: Hepatocyte growth factor receptor (1382 aa).

Residues 1–24 (MKSPAVLAPGILVFLFTFVQKSDG) form the signal peptide. Residues 25-933 (ECKEALVKSR…VIVQPDQNFT (909 aa)) are Extracellular-facing. Positions 27-516 (KEALVKSRMN…TGKKITKIPL (490 aa)) constitute a Sema domain. Asn-45 is a glycosylation site (N-linked (GlcNAc...) asparagine). Cystine bridges form between Cys-95-Cys-101, Cys-98-Cys-160, Cys-133-Cys-141, and Cys-173-Cys-176. A glycan (N-linked (GlcNAc...) asparagine) is linked at Asn-106. Asn-149 is a glycosylation site (N-linked (GlcNAc...) asparagine). N-linked (GlcNAc...) asparagine glycans are attached at residues Asn-203 and Asn-359. 2 disulfides stabilise this stretch: Cys-299–Cys-364 and Cys-386–Cys-398. Asn-400 and Asn-406 each carry an N-linked (GlcNAc...) asparagine glycan. Intrachain disulfides connect Cys-521-Cys-539, Cys-527-Cys-562, Cys-530-Cys-546, and Cys-542-Cys-552. IPT/TIG domains follow at residues 564-656 (PAIY…FSYV), 658-740 (PIIT…FIYR), and 743-837 (PIVY…LIYV). Thr-583 carries an O-linked (Man) threonine glycan. N-linked (GlcNAc...) asparagine glycans are attached at residues Asn-608 and Asn-636. 2 O-linked (Man) threonine glycosylation sites follow: Thr-677 and Thr-762. Asn-786, Asn-880, and Asn-931 each carry an N-linked (GlcNAc...) asparagine glycan. The chain crosses the membrane as a helical span at residues 934-956 (GLIVGVVSISIILLLLLGLFLWL). Residues 957–1382 (KKRKQIKDLG…QDNVNGEGDT (426 aa)) lie on the Cytoplasmic side of the membrane. The residue at position 967 (Ser-967) is a Phosphoserine. Residue Thr-978 is modified to Phosphothreonine. Phosphoserine is present on residues Ser-991, Ser-998, and Ser-1001. Position 1004 is a phosphotyrosine (Tyr-1004). The Protein kinase domain occupies 1079-1346 (VHFNEVIGRG…RISAIFSTFI (268 aa)). ATP is bound by residues 1085–1093 (IGRGHFGCV) and Lys-1111. The active-site Proton acceptor is Asp-1205. The tract at residues 1213-1382 (LDEKFTVKVA…QDNVNGEGDT (170 aa)) is interaction with RANBP9. At Tyr-1231 the chain carries Phosphotyrosine. Tyr-1235 and Tyr-1236 each carry phosphotyrosine; by autocatalysis. Residue Thr-1290 is modified to Phosphothreonine. The segment at 1321–1360 (WHPKAELRPSFSELVSRISAIFSTFIGEHYVHVNATYVNV) is interaction with MUC20. Tyr-1350 and Tyr-1357 each carry phosphotyrosine; by autocatalysis. Tyr-1366 is modified (phosphotyrosine).

It belongs to the protein kinase superfamily. Tyr protein kinase family. Heterodimer made of an alpha chain (50 kDa) and a beta chain (145 kDa) which are disulfide linked. Binds PLXNB1. Interacts when phosphorylated with downstream effectors including STAT3, PIK3R1, SRC, PCLG1, GRB2 and GAB1. Interacts with SPSB1, SPSB2 and SPSB4. Interacts with INPP5D/SHIP1. When phosphorylated at Tyr-1357, interacts with INPPL1/SHIP2. Interacts with RANBP9 and RANBP10, as well as SPSB1, SPSB2, SPSB3 and SPSB4. SPSB1 binding occurs in the presence and in the absence of HGF, however HGF treatment has a positive effect on this interaction. Interacts with MUC20; prevents interaction with GRB2 and suppresses hepatocyte growth factor-induced cell proliferation. Interacts with GRB10. Interacts with PTPN1 and PTPN2. Interacts with HSP90AA1 and HSP90AB1; the interaction suppresses MET kinase activity. Interacts with tensin TNS3. Interacts (when phosphorylated) with tensin TNS4 (via SH2 domain); the interaction increases MET protein stability by inhibiting MET endocytosis and subsequent lysosomal degradation. Autophosphorylated in response to ligand binding on Tyr-1235 and Tyr-1236 in the kinase domain leading to further phosphorylation of Tyr-1350 and Tyr-1357 in the C-terminal multifunctional docking site. Dephosphorylated by PTPRJ at Tyr-1350 and Tyr-1366. Dephosphorylated by PTPN1 and PTPN2. Post-translationally, ubiquitinated. Ubiquitination by CBL regulates the receptor stability and activity through proteasomal degradation. In terms of processing, O-mannosylation of IPT/TIG domains by TMEM260 is required for protein maturation. O-mannosylated residues are composed of single mannose glycans that are not elongated or modified.

The protein resides in the membrane. It carries out the reaction L-tyrosyl-[protein] + ATP = O-phospho-L-tyrosyl-[protein] + ADP + H(+). Its activity is regulated as follows. In its inactive state, the C-terminal tail interacts with the catalytic domain and inhibits the kinase activity. Upon ligand binding, the C-terminal tail is displaced and becomes phosphorylated, thus increasing the kinase activity. Receptor tyrosine kinase that transduces signals from the extracellular matrix into the cytoplasm by binding to hepatocyte growth factor/HGF ligand. Regulates many physiological processes including proliferation, scattering, morphogenesis and survival. Ligand binding at the cell surface induces autophosphorylation of MET on its intracellular domain that provides docking sites for downstream signaling molecules. Following activation by ligand, interacts with the PI3-kinase subunit PIK3R1, PLCG1, SRC, GRB2, STAT3 or the adapter GAB1. Recruitment of these downstream effectors by MET leads to the activation of several signaling cascades including the RAS-ERK, PI3 kinase-AKT, or PLCgamma-PKC. The RAS-ERK activation is associated with the morphogenetic effects while PI3K/AKT coordinates prosurvival effects. During embryonic development, MET signaling plays a role in gastrulation, development and migration of muscles and neuronal precursors, angiogenesis and kidney formation. In adults, participates in wound healing as well as organ regeneration and tissue remodeling. Also promotes differentiation and proliferation of hematopoietic cells. This chain is Hepatocyte growth factor receptor (MET), found in Muntiacus muntjak (Barking deer).